The primary structure comprises 176 residues: Photosystem I assembly protein Ycf4 (176 aa).

2 helical membrane passes run 22-42 (FLWA…GTAS) and 57-77 (VMTF…SMLF).

The protein belongs to the Ycf4 family.

The protein resides in the plastid thylakoid membrane. Its function is as follows. Seems to be required for the assembly of the photosystem I complex. The protein is Photosystem I assembly protein Ycf4 of Cuscuta obtusiflora (Peruvian dodder).